Reading from the N-terminus, the 385-residue chain is Polyketide synthase 2 (385 aa).

The active site involves C157.

The protein belongs to the thiolase-like superfamily. Chalcone/stilbene synthases family. In terms of tissue distribution, expressed in leaves and glandular trichomes.

The protein localises to the cytoplasm. In terms of biological role, polyketide synthase responsible for the biosynthesis of secondary metabolites. The polypeptide is Polyketide synthase 2 (PKSG2) (Cannabis sativa (Hemp)).